We begin with the raw amino-acid sequence, 227 residues long: Cytochrome c oxidase subunit 2 (227 aa).

The Mitochondrial intermembrane segment spans residues 1–14 (MTHPLQLGFQDATS). A helical membrane pass occupies residues 15–45 (PIMEELLHFHDHTLMIVFLISSLVLYIITLM). Residues 46–59 (LTTKLTHTSTMDAQ) are Mitochondrial matrix-facing. Residues 60–87 (EVETVWTILPAIILILIALPSLRILYMM) traverse the membrane as a helical segment. Residues 88-227 (DEINNPLLTV…YFEDWSVSMT (140 aa)) lie on the Mitochondrial intermembrane side of the membrane. Cu cation contacts are provided by His161, Cys196, Glu198, Cys200, His204, and Met207. Glu198 is a Mg(2+) binding site. Residue Tyr218 is modified to Phosphotyrosine.

It belongs to the cytochrome c oxidase subunit 2 family. In terms of assembly, component of the cytochrome c oxidase (complex IV, CIV), a multisubunit enzyme composed of 14 subunits. The complex is composed of a catalytic core of 3 subunits MT-CO1, MT-CO2 and MT-CO3, encoded in the mitochondrial DNA, and 11 supernumerary subunits COX4I, COX5A, COX5B, COX6A, COX6B, COX6C, COX7A, COX7B, COX7C, COX8 and NDUFA4, which are encoded in the nuclear genome. The complex exists as a monomer or a dimer and forms supercomplexes (SCs) in the inner mitochondrial membrane with NADH-ubiquinone oxidoreductase (complex I, CI) and ubiquinol-cytochrome c oxidoreductase (cytochrome b-c1 complex, complex III, CIII), resulting in different assemblies (supercomplex SCI(1)III(2)IV(1) and megacomplex MCI(2)III(2)IV(2)). Found in a complex with TMEM177, COA6, COX18, COX20, SCO1 and SCO2. Interacts with TMEM177 in a COX20-dependent manner. Interacts with COX20. Interacts with COX16. Cu cation serves as cofactor.

Its subcellular location is the mitochondrion inner membrane. The catalysed reaction is 4 Fe(II)-[cytochrome c] + O2 + 8 H(+)(in) = 4 Fe(III)-[cytochrome c] + 2 H2O + 4 H(+)(out). Its function is as follows. Component of the cytochrome c oxidase, the last enzyme in the mitochondrial electron transport chain which drives oxidative phosphorylation. The respiratory chain contains 3 multisubunit complexes succinate dehydrogenase (complex II, CII), ubiquinol-cytochrome c oxidoreductase (cytochrome b-c1 complex, complex III, CIII) and cytochrome c oxidase (complex IV, CIV), that cooperate to transfer electrons derived from NADH and succinate to molecular oxygen, creating an electrochemical gradient over the inner membrane that drives transmembrane transport and the ATP synthase. Cytochrome c oxidase is the component of the respiratory chain that catalyzes the reduction of oxygen to water. Electrons originating from reduced cytochrome c in the intermembrane space (IMS) are transferred via the dinuclear copper A center (CU(A)) of subunit 2 and heme A of subunit 1 to the active site in subunit 1, a binuclear center (BNC) formed by heme A3 and copper B (CU(B)). The BNC reduces molecular oxygen to 2 water molecules using 4 electrons from cytochrome c in the IMS and 4 protons from the mitochondrial matrix. The chain is Cytochrome c oxidase subunit 2 (MT-CO2) from Carlito syrichta (Philippine tarsier).